Here is a 263-residue protein sequence, read N- to C-terminus: MWELRSASFWRAIFAEFFATLFYVFFGLGASLRWAPGPLHVLQVALAFGLALAXLVQTVGHISGAHVNPAVTFXFLVGSQMSLLRAFCYMAAQLLGAVAGAAVLYSVTPPAVRGNLALNTLHAGVSVXQATTVEIFLTLQFVLCIFATYDERRNGRLGSVALAVGFSLTLGHLFGMYYTGAGMNPARSFAPAILTRNFTNHWVYWVGPIIGGGLGSLLYDFLLFPRLKSVSERLSILKGTRPSDNNGQPEGTGEPVELKTQAL.

Topologically, residues 1–9 are cytoplasmic; sequence MWELRSASF. The chain crosses the membrane as a helical span at residues 10–29; it reads WRAIFAEFFATLFYVFFGLG. Residues 30–41 are Extracellular-facing; that stretch reads ASLRWAPGPLHV. The helical transmembrane segment at 42–59 threads the bilayer; the sequence is LQVALAFGLALAXLVQTV. Residues 60 to 61 are Cytoplasmic-facing; that stretch reads GH. The segment at residues 62-77 is an intramembrane region (discontinuously helical); that stretch reads ISGAHVNPAVTFXFLV. The NPA 1 motif lies at 68-70; sequence NPA. Over 78-82 the chain is Cytoplasmic; that stretch reads GSQMS. A helical membrane pass occupies residues 83-106; that stretch reads LLRAFCYMAAQLLGAVAGAAVLYS. The Extracellular segment spans residues 107-127; it reads VTPPAVRGNLALNTLHAGVSV. The chain crosses the membrane as a helical span at residues 128–148; the sequence is XQATTVEIFLTLQFVLCIFAT. Topologically, residues 149 to 156 are cytoplasmic; sequence YDERRNGR. A helical membrane pass occupies residues 157–175; sequence LGSVALAVGFSLTLGHLFG. At 176-178 the chain is on the extracellular side; that stretch reads MYY. Residues 179–193 constitute an intramembrane region (discontinuously helical); that stretch reads TGAGMNPARSFAPAI. An NPA 2 motif is present at residues 184–186; it reads NPA. Topologically, residues 194-200 are extracellular; sequence LTRNFTN. Residues 201–222 traverse the membrane as a helical segment; sequence HWVYWVGPIIGGGLGSLLYDFL. Residues 223–263 are Cytoplasmic-facing; the sequence is LFPRLKSVSERLSILKGTRPSDNNGQPEGTGEPVELKTQAL. Residues 227-237 are interaction with CALM; that stretch reads LKSVSERLSIL. S235 and S243 each carry phosphoserine. The tract at residues 238-263 is disordered; it reads KGTRPSDNNGQPEGTGEPVELKTQAL. Deamidated asparagine; by deterioration is present on residues N245 and N246.

The protein belongs to the MIP/aquaporin (TC 1.A.8) family. As to quaternary structure, homotetramer; each monomer provides an independent water pore. Two homotetramers on opposing membranes can dimerize, forming a cell-cell junction. Interacts with CALM; the calcium-calmodulin/CALM complex interacts with the cytoplasmic domains of two aquaporins, leading to channel closure. Interacts with BFSP1 (via C-terminus); prevents calcium-dependent inhibition of the water channel activity. In terms of processing, subject to partial proteolytic cleavage in the eye lens core. Partial proteolysis promotes interactions between tetramers from adjoining membranes. Post-translationally, fatty acylated at Met-1 and Lys-238. The acyl modifications, in decreasing order of ion abundance, are: oleoyl (C18:1) &gt; palmitoyl (C16:0) &gt; stearoyl (C18:0) &gt; eicosenoyl (C20:1) &gt; dihomo-gamma-linolenoyl (C20:3) &gt; palmitoleoyl (C16:1) &gt; eicosadienoyl (C20:2). As to expression, detected in eye lens (at protein level).

It localises to the cell membrane. The protein localises to the cell junction. The catalysed reaction is H2O(in) = H2O(out). The water channel activity is inhibited by calcium through calmodulin/CALM. Aquaporins form homotetrameric transmembrane channels, with each monomer independently mediating water transport across the plasma membrane along its osmotic gradient. Specifically expressed in lens fiber cells, this aquaporin is crucial for maintaining lens water homeostasis and transparency. Beyond water permeability, it also acts as a cell-to-cell adhesion molecule, forming thin junctions between lens fiber cells that are essential for maintaining the ordered structure and transparency of the lens. This Cavia porcellus (Guinea pig) protein is Lens fiber major intrinsic protein.